The sequence spans 633 residues: Alpha-amylase (633 aa).

E123 (nucleophile) is an active-site residue. D214 serves as the catalytic Proton donor.

The protein belongs to the glycosyl hydrolase 57 family.

It catalyses the reaction Endohydrolysis of (1-&gt;4)-alpha-D-glucosidic linkages in polysaccharides containing three or more (1-&gt;4)-alpha-linked D-glucose units.. This Pyrococcus horikoshii (strain ATCC 700860 / DSM 12428 / JCM 9974 / NBRC 100139 / OT-3) protein is Alpha-amylase (amyA).